Here is a 501-residue protein sequence, read N- to C-terminus: MEMMQLSFASAVVYSLIFFVFLLVKQLLKPKSHKKLPPGPWTLPIIGNLHQILGALPHRIFKDLSDKYGPLMRIMMGERTTIIVSSATMAKVVLHTHGLAVANRPINSVAKVICYNNLGVTFAEYGEYLKQLRQLYMLELLSPKRVQSFSAVFEDELQTFVKSIKSEVGQPMIIYEKSVTYLYSTICRVMLGNVCNEREKLIKICKKVSFYSAAPIRIEDLFPSMKFIISRIFSTNSILKDLLKDLDDVLDIVIAERENSQYAQEEEDMLGILLKHKRSDGNNSKLKITNKDIKAIIFELLLAATLSVADVVEWAMVEILRHPKVLKQVHDEVRQAFKGQKTITGSDLGKLEYLHMCFKESTRLHPAAPLLFPREAREEFEIDGYTIPKGSWVLTNYWAVGRDPRIWPKPDEFDPERFRNSDIEFYGNHFELIPFGTGRRGCPGILFGITEALYLLAALFYHFDWKLAGGITPEEIDMTEVFGAGCILKNPLNLIPRLAEN.

A helical membrane pass occupies residues 4-24; that stretch reads MQLSFASAVVYSLIFFVFLLV. An N-linked (GlcNAc...) asparagine glycan is attached at Asn-282. Cys-442 contacts heme.

It belongs to the cytochrome P450 family. It depends on heme as a cofactor.

The protein resides in the membrane. It carries out the reaction (19E)-geissoschizine + reduced [NADPH--hemoprotein reductase] + O2 = rhazimal + oxidized [NADPH--hemoprotein reductase] + 2 H2O + H(+). It catalyses the reaction (19E)-geissoschizine + reduced [NADPH--hemoprotein reductase] + O2 = akuammicine + formate + oxidized [NADPH--hemoprotein reductase] + H2O + H(+). The protein operates within alkaloid biosynthesis. Its function is as follows. A cytochrome P450 monooxygenase involved in the biosynthesis of akuammilan monoterpene indole alkaloids (MIAs) natural products, components with various biological properties such as antidiabetic, antibacterial, anti-inflammatory, anticancer, and antimalarial activities. Catalyzes the conversion of geissoschizine to rhazimal. Can also, with lower efficiency, support the conversion of geissoschizine to akuammicine. The protein is Rhazimal synthase of Alstonia scholaris (Dogbane).